An 854-amino-acid polypeptide reads, in one-letter code: ATP-dependent Clp protease ATP-binding subunit ClpA homolog (854 aa).

The Clp R domain maps to 33–175 (FERFTEKAVK…RSNIIRMIGE (143 aa)). Repeat stretches follow at residues 36-101 (FTEK…IGRG) and 111-175 (FTPR…MIGE). Residue 238–245 (GEPGVGKT) coordinates ATP. In terms of domain architecture, UVR spans 447–482 (DEELRHIQKIKNELIRSGDFEEASQFREREIEVKVQ). ATP is bound at residue 579–586 (GPTGVGKT).

Belongs to the ClpA/ClpB family.

The protein resides in the plastid. It is found in the chloroplast. Functionally, may interact with a ClpP-like protease involved in degradation of denatured proteins in the chloroplast. The protein is ATP-dependent Clp protease ATP-binding subunit ClpA homolog (clpC) of Cyanidium caldarium (Red alga).